Here is a 396-residue protein sequence, read N- to C-terminus: Pectinesterase (396 aa).

An N-terminal signal peptide occupies residues 1 to 26; the sequence is MQSTTLYLKTAAFLGGCSLFAATALA. Thr174 is a substrate binding site. The Proton donor role is filled by Asp232. Asp259 acts as the Nucleophile in catalysis. Substrate-binding residues include Arg324 and Trp326.

Belongs to the pectinesterase family.

It is found in the secreted. The enzyme catalyses [(1-&gt;4)-alpha-D-galacturonosyl methyl ester](n) + n H2O = [(1-&gt;4)-alpha-D-galacturonosyl](n) + n methanol + n H(+). It functions in the pathway glycan metabolism; pectin degradation; 2-dehydro-3-deoxy-D-gluconate from pectin: step 1/5. Its function is as follows. Involved in maceration and soft-rotting of plant tissue. The chain is Pectinesterase (pme) from Ralstonia solanacearum (Pseudomonas solanacearum).